We begin with the raw amino-acid sequence, 308 residues long: D-alanine--D-alanine ligase (308 aa).

Residues 105 to 302 (KAIFRSLGLA…FPDLCDRILD (198 aa)) form the ATP-grasp domain. 133-188 (DLPFGLPCVVKPAGEGSSVGVHLVNAAAELGPACRDAAGYAGDVIVERYVKGTEVD) serves as a coordination point for ATP. Asp256, Glu269, and Asn271 together coordinate Mg(2+).

This sequence belongs to the D-alanine--D-alanine ligase family. The cofactor is Mg(2+). Mn(2+) is required as a cofactor.

The protein resides in the cytoplasm. The enzyme catalyses 2 D-alanine + ATP = D-alanyl-D-alanine + ADP + phosphate + H(+). The protein operates within cell wall biogenesis; peptidoglycan biosynthesis. Functionally, cell wall formation. This chain is D-alanine--D-alanine ligase, found in Anaeromyxobacter dehalogenans (strain 2CP-C).